Here is a 362-residue protein sequence, read N- to C-terminus: Phosphoserine aminotransferase (362 aa).

L-glutamate-binding residues include Ser-9 and Arg-42. Pyridoxal 5'-phosphate is bound by residues 76 to 77 (AR), Trp-102, Thr-153, Asp-174, and Gln-197. Position 198 is an N6-(pyridoxal phosphate)lysine (Lys-198). 239-240 (NT) is a pyridoxal 5'-phosphate binding site.

It belongs to the class-V pyridoxal-phosphate-dependent aminotransferase family. SerC subfamily. In terms of assembly, homodimer. The cofactor is pyridoxal 5'-phosphate.

The protein localises to the cytoplasm. The catalysed reaction is O-phospho-L-serine + 2-oxoglutarate = 3-phosphooxypyruvate + L-glutamate. It carries out the reaction 4-(phosphooxy)-L-threonine + 2-oxoglutarate = (R)-3-hydroxy-2-oxo-4-phosphooxybutanoate + L-glutamate. Its pathway is amino-acid biosynthesis; L-serine biosynthesis; L-serine from 3-phospho-D-glycerate: step 2/3. It functions in the pathway cofactor biosynthesis; pyridoxine 5'-phosphate biosynthesis; pyridoxine 5'-phosphate from D-erythrose 4-phosphate: step 3/5. Its function is as follows. Catalyzes the reversible conversion of 3-phosphohydroxypyruvate to phosphoserine and of 3-hydroxy-2-oxo-4-phosphonooxybutanoate to phosphohydroxythreonine. The chain is Phosphoserine aminotransferase from Photorhabdus laumondii subsp. laumondii (strain DSM 15139 / CIP 105565 / TT01) (Photorhabdus luminescens subsp. laumondii).